The chain runs to 268 residues: GTP cyclohydrolase FolE2 (268 aa).

It belongs to the GTP cyclohydrolase IV family.

It carries out the reaction GTP + H2O = 7,8-dihydroneopterin 3'-triphosphate + formate + H(+). Its pathway is cofactor biosynthesis; 7,8-dihydroneopterin triphosphate biosynthesis; 7,8-dihydroneopterin triphosphate from GTP: step 1/1. Its function is as follows. Converts GTP to 7,8-dihydroneopterin triphosphate. The sequence is that of GTP cyclohydrolase FolE2 from Ralstonia nicotianae (strain ATCC BAA-1114 / GMI1000) (Ralstonia solanacearum).